A 156-amino-acid chain; its full sequence is MPRKGPAPKRPLVNDPVYGSQLVTQLVNKVLLDGKKSLAERIVYGALEQARDKTGTDPVVTLKRALDNVKPALEVRSRRVGGATYQVPVEVRPDRSVTLALRWLVSFSKARREKTMVERLANEILDASNGLGAAVKRREDTHKMAEANRAFAHYRW.

Belongs to the universal ribosomal protein uS7 family. Part of the 30S ribosomal subunit. Contacts proteins S9 and S11.

One of the primary rRNA binding proteins, it binds directly to 16S rRNA where it nucleates assembly of the head domain of the 30S subunit. Is located at the subunit interface close to the decoding center, probably blocks exit of the E-site tRNA. This is Small ribosomal subunit protein uS7 from Mycobacterium sp. (strain JLS).